The sequence spans 620 residues: Probable serine/threonine-protein kinase RTK1 (620 aa).

Disordered regions lie at residues 1–20 (MVKE…SLFR), 29–130 (AKIF…PVRT), 153–186 (KDAF…SNLS), 210–237 (QAST…KKKS), and 252–271 (HDNH…TKPK). The span at 7–18 (LHSSSSTSLSSL) shows a compositional bias: low complexity. Basic and acidic residues predominate over residues 56–76 (KNTDSDQEDQIKYNKPNDRRS). Phosphothreonine is present on Thr58. A Phosphoserine modification is found at Ser60. Composition is skewed to polar residues over residues 95–107 (VASS…SPTS), 165–186 (TAHS…SNLS), and 210–222 (QAST…LQHN). Ser216 is subject to Phosphoserine. Basic residues predominate over residues 254–263 (NHHHHHHHNR). In terms of domain architecture, Protein kinase spans 302–575 (GIPGRKLGEG…MNDVVKDDWL (274 aa)). ATP contacts are provided by residues 308–316 (LGEGASGSV) and Lys330. Lys334 is covalently cross-linked (Glycyl lysine isopeptide (Lys-Gly) (interchain with G-Cter in ubiquitin)). Residue Asp430 is the Proton acceptor of the active site.

It belongs to the protein kinase superfamily. Ser/Thr protein kinase family. Interacts with ribosome biogenesis factors ARC1, CKA2 and GUS1.

It catalyses the reaction L-seryl-[protein] + ATP = O-phospho-L-seryl-[protein] + ADP + H(+). The enzyme catalyses L-threonyl-[protein] + ATP = O-phospho-L-threonyl-[protein] + ADP + H(+). Probable serine/threonine-protein kinase that may be involved in ribosome biogenesis. The sequence is that of Probable serine/threonine-protein kinase RTK1 (RTK1) from Saccharomyces cerevisiae (strain ATCC 204508 / S288c) (Baker's yeast).